The chain runs to 545 residues: MLACRKPGLRPPLLLLLPLLGPLGPCSPGTPAAAAPADDAAELEFFTERPLHLVSPAFLSFTIDANLATDPRFFTFLGSSKLRTLARGLAPAYLRFGGNKGDFLIFDPKKEPAFEERSYWLSQSNQDICKSGSIPSDVEEKLRLEWPFQEQVLLREQYQKKFTNSTYSRSSVDMLYTFASCSGLNLIFGVNALLRTTDMHWDSSNAQLLLDYCSSKNYNISWELGNEPNSFQRKAGIFINGRQLGEDFIEFRKLLGKSAFKNAKLYGPDIGQPRRNTVKMLKSFLKAGGEVIDSVTWHHYYVNGRIATKEDFLNPDILDTFISSVQKTLRIVEKIRPLKKVWLGETSSAFGGGAPFLSNTFAAGFMWLDKLGLSARMGIEVVMRQVLFGAGNYHLVDGNFEPLPDYWLSLLFKKLVGNKVLMASVKGPDRSKFRVYLHCTNTKHPRYKEGDLTLYALNLHNVTKHLELPHHLFNKQVDKYLIKPSGTDGLLSKSVQLNGQILKMVDEQTLPALTEKPLHPGSSLGMPPFSYGFFVIRNAKVAACI.

Positions 1-37 (MLACRKPGLRPPLLLLLPLLGPLGPCSPGTPAAAAPA) are cleaved as a signal peptide. Heparan sulfate group is bound at residue 64–66 (DAN). Residues 112-159 (PAFEERSYWLSQSNQDICKSGSIPSDVEEKLRLEWPFQEQVLLREQYQ) constitute a propeptide, linker peptide. A disulfide bridge connects residues C129 and C181. 160 to 164 (KKFTN) contributes to the heparan sulfate group binding site. N-linked (GlcNAc...) asparagine glycans are attached at residues N164 and N219. Residue E227 is the Proton donor of the active site. Residues 272–282 (QPRRNTVKMLK), H298, and R305 each bind heparan sulfate group. The required for heterodimerization with the heparanase 8 kDa subunit stretch occupies residues 290–419 (EVIDSVTWHH…LLFKKLVGNK (130 aa)). E345 (nucleophile) is an active-site residue. Heparan sulfate group is bound by residues 350–352 (FGG) and 391–393 (GNY). C439 and C544 are disulfide-bonded. N-linked (GlcNAc...) asparagine glycosylation occurs at N461. Residues 529 to 545 (FSYGFFVIRNAKVAACI) form a required for transferring proheparanase to the Golgi apparatus, secretion and subsequent enzyme activity and for enhancement of PKB/AKT1 phosphorylation region.

The protein belongs to the glycosyl hydrolase 79 family. In terms of assembly, heterodimer; heterodimer formation between the 8 kDa and the 50 kDa subunits is required for enzyme activity. Interacts with TF; the interaction, inhibited by heparin, enhances the generation of activated factor X and activates coagulation. Interacts with HRG; the interaction is enhanced at acidic pH, partially inhibits binding of HPSE to cell surface receptors and modulates its enzymatic activity. Interacts with SDC1; the interaction enhances the shedding of SDC1. Interacts with HPSE2. Proteolytically processed. The cleavage of the 65 kDa form leads to the generation of a linker peptide, and the 8 kDa and the 50 kDa products. The active form, the 8/50 kDa heterodimer, is resistant to degradation. Complete removal of the linker peptide appears to be a prerequisite to the complete activation of the enzyme. Post-translationally, N-glycosylated. Glycosylation of the 50 kDa subunit appears to be essential for its solubility. As to expression, highly expressed in placenta and weakly in the kidney, lung, spleen and uterus.

Its subcellular location is the lysosome membrane. It localises to the secreted. The protein localises to the nucleus. The catalysed reaction is endohydrolysis of (1-&gt;4)-beta-D-glycosidic bonds of heparan sulfate chains in heparan sulfate proteoglycan.. Inhibited by laminarin sulfate and, to a lower extent, by heparin, sulfamin and EDTA. Activated by calcium and magnesium. Functionally, endoglycosidase that cleaves heparan sulfate proteoglycans (HSPGs) into heparan sulfate side chains and core proteoglycans. Participates in extracellular matrix (ECM) degradation and remodeling. Selectively cleaves the linkage between a glucuronic acid unit and an N-sulfo glucosamine unit carrying either a 3-O-sulfo or a 6-O-sulfo group. Can also cleave the linkage between a glucuronic acid unit and an N-sulfo glucosamine unit carrying a 2-O-sulfo group, but not linkages between a glucuronic acid unit and a 2-O-sulfated iduronic acid moiety. Essentially inactive at neutral pH but becomes active under acidic conditions such as during tumor invasion and in inflammatory processes. Facilitates cell migration associated with metastasis, wound healing and inflammation. Enhances shedding of syndecans. Acts as a procoagulant by enhancing the generation of activated factor X/F10 in the presence of tissue factor/TF and activated factor VII/F7. Independent of its enzymatic activity, increases cell adhesion to the extracellular matrix (ECM). Enhances AKT1/PKB phosphorylation, possibly via interaction with a lipid raft-resident receptor. Plays a role in the regulation of osteogenesis. Enhances angiogenesis through up-regulation of SRC-mediated activation of VEGF. Implicated in hair follicle inner root sheath differentiation and hair homeostasis. This Bos taurus (Bovine) protein is Heparanase (HPSE).